Reading from the N-terminus, the 662-residue chain is Probable actin-related protein 8 (662 aa).

Composition is skewed to basic and acidic residues over residues alanine 50–glutamate 59 and threonine 67–valine 77. The interval alanine 50–glutamate 92 is disordered. A compositionally biased stretch (acidic residues) spans glutamate 78–leucine 89. Aspartate 339–alanine 342 serves as a coordination point for ATP.

It belongs to the actin family. As to quaternary structure, component of the chromatin remodeling Ino80 complex. Exists as monomers and dimers, but the dimer is most probably the biologically relevant form required for stable interactions with histones that exploits the twofold symmetry of the nucleosome core.

Its subcellular location is the nucleus. Functionally, probably involved in transcription regulation via its interaction with the INO80 complex, a chromatin remodeling complex. Exhibits low basal ATPase activity, and unable to polymerize. Strongly prefer nucleosomes and H3-H4 tetramers over H2A-H2B dimers, suggesting it may act as a nucleosome recognition module within the complex. In Schizosaccharomyces pombe (strain 972 / ATCC 24843) (Fission yeast), this protein is Probable actin-related protein 8.